Consider the following 1719-residue polypeptide: 5'-3' exoribonuclease 1 (1719 aa).

Residues 1268 to 1298 (HKSGFTDHSVRHQQRKHDSQRKFKEEYKSPK) show a composition bias toward basic and acidic residues. Residues 1268–1317 (HKSGFTDHSVRHQQRKHDSQRKFKEEYKSPKAECQSQKLSSKQTSGGSAR) form a disordered region. Residues 1301–1314 (CQSQKLSSKQTSGG) show a composition bias toward polar residues. A Phosphoserine modification is found at serine 1382. Residues 1397–1430 (ILKIDSPDTRDSKNDMKKSDNEATVSSRRDERGV) show a composition bias toward basic and acidic residues. Disordered stretches follow at residues 1397–1445 (ILKI…KPHG) and 1634–1719 (ENKE…KPSE). Residues 1638-1660 (AQSSQATPLQTNKPGSSEATKMT) show a composition bias toward polar residues. The segment covering 1661–1680 (PQESPPASSSSSQAAQPVSS) has biased composition (low complexity). Residues 1681 to 1690 (HVETASQGHV) are compositionally biased toward polar residues.

This sequence belongs to the 5'-3' exonuclease family. Found in a mRNP complex with UPF1, UPF2, UPF3B and XRN1. Associates with alpha and beta tubulins. Interacts with DIS3L2. Interacts with ZC3HAV1 in an RNA-dependent manner. Interacts with ZFP36L1. Interacts with TRIM71 (via NHL repeats) in an RNA-dependent manner. Interacts with YTHDC2 (via ANK repeats). Interacts with DHX34; the interaction is RNA-independent. As to expression, expressed in heart, brain (spinal cord, dorsal root and superior cervical ganglia, neurons of the cerebrum and brain stem), peripheral nerve fibers in the skin and intestine, spleen, lung, liver, skeletal muscle, kidney and testis.

The protein resides in the cytoplasm. Its function is as follows. Major 5'-3' exoribonuclease involved in mRNA decay. Required for the 5'-3'-processing of the G4 tetraplex-containing DNA and RNA substrates. The kinetic of hydrolysis is faster for G4 RNA tetraplex than for G4 DNA tetraplex and monomeric RNA tetraplex. Binds to RNA and DNA. Plays a role in replication-dependent histone mRNA degradation. The chain is 5'-3' exoribonuclease 1 from Mus musculus (Mouse).